Reading from the N-terminus, the 71-residue chain is Translation initiation factor IF-1 (71 aa).

Residues 1–71 (MSKDDLIQFT…LTKGRVIHRH (71 aa)) form the S1-like domain.

This sequence belongs to the IF-1 family. In terms of assembly, component of the 30S ribosomal translation pre-initiation complex which assembles on the 30S ribosome in the order IF-2 and IF-3, IF-1 and N-formylmethionyl-tRNA(fMet); mRNA recruitment can occur at any time during PIC assembly.

The protein localises to the cytoplasm. One of the essential components for the initiation of protein synthesis. Stabilizes the binding of IF-2 and IF-3 on the 30S subunit to which N-formylmethionyl-tRNA(fMet) subsequently binds. Helps modulate mRNA selection, yielding the 30S pre-initiation complex (PIC). Upon addition of the 50S ribosomal subunit IF-1, IF-2 and IF-3 are released leaving the mature 70S translation initiation complex. This Rickettsia canadensis (strain McKiel) protein is Translation initiation factor IF-1.